A 311-amino-acid polypeptide reads, in one-letter code: Beta-lactamase (311 aa).

The tat-type signal signal peptide spans 1-36 (MRKPTSSLTRRSVLGAGLGLGGALALGSTTASAASA). Ser-86 acts as the Acyl-ester intermediate in catalysis. Residue 252–254 (KSG) coordinates substrate.

It belongs to the class-A beta-lactamase family. Post-translationally, predicted to be exported by the Tat system. The position of the signal peptide cleavage has not been experimentally proven.

It carries out the reaction a beta-lactam + H2O = a substituted beta-amino acid. In terms of biological role, hydrolyzes benzylpenicillin and cloxacillin (at 10% of the rate of benzylpenicillin). The polypeptide is Beta-lactamase (bla) (Streptomyces cellulosae).